Here is a 481-residue protein sequence, read N- to C-terminus: Adenosylhomocysteinase (481 aa).

Residues threonine 65, aspartate 140, and glutamate 200 each contribute to the substrate site. An NAD(+)-binding site is contributed by 201–203; it reads TTT. Positions 230 and 234 each coordinate substrate. NAD(+)-binding positions include asparagine 235, 264–269, glutamate 287, asparagine 322, 343–345, and asparagine 393; these read GYGDVG and IGH.

The protein belongs to the adenosylhomocysteinase family. Requires NAD(+) as cofactor.

The protein resides in the cytoplasm. It catalyses the reaction S-adenosyl-L-homocysteine + H2O = L-homocysteine + adenosine. It participates in amino-acid biosynthesis; L-homocysteine biosynthesis; L-homocysteine from S-adenosyl-L-homocysteine: step 1/1. Functionally, may play a key role in the regulation of the intracellular concentration of adenosylhomocysteine. This is Adenosylhomocysteinase from Polynucleobacter necessarius subsp. necessarius (strain STIR1).